Here is a 305-residue protein sequence, read N- to C-terminus: GTPase Era (305 aa).

Residues 13 to 181 (RCGYVAIVGR…EKLVAERLPE (169 aa)) enclose the Era-type G domain. A G1 region spans residues 21 to 28 (GRPNVGKS). 21-28 (GRPNVGKS) contacts GTP. Residues 47–51 (QTTRH) are G2. Positions 68–71 (DTPG) are G3. GTP is bound by residues 68 to 72 (DTPGL) and 130 to 133 (NKTD). The segment at 130–133 (NKTD) is G4. Positions 160–162 (ISA) are G5. The KH type-2 domain maps to 204–288 (VREKIMRQLG…MLNLWVKVKG (85 aa)).

The protein belongs to the TRAFAC class TrmE-Era-EngA-EngB-Septin-like GTPase superfamily. Era GTPase family. Monomer.

It localises to the cytoplasm. Its subcellular location is the cell inner membrane. Functionally, an essential GTPase that binds both GDP and GTP, with rapid nucleotide exchange. Plays a role in 16S rRNA processing and 30S ribosomal subunit biogenesis and possibly also in cell cycle regulation and energy metabolism. This chain is GTPase Era, found in Pseudomonas aeruginosa (strain LESB58).